The chain runs to 244 residues: 6-carboxyhexanoate--CoA ligase (244 aa).

Belongs to the BioW family. In terms of assembly, homodimer. Requires Mg(2+) as cofactor.

The catalysed reaction is heptanedioate + ATP + CoA = 6-carboxyhexanoyl-CoA + AMP + diphosphate. Its pathway is metabolic intermediate metabolism; pimeloyl-CoA biosynthesis; pimeloyl-CoA from pimelate: step 1/1. Its function is as follows. Catalyzes the transformation of pimelate into pimeloyl-CoA with concomitant hydrolysis of ATP to AMP. This chain is 6-carboxyhexanoate--CoA ligase, found in Methanococcus maripaludis (strain C6 / ATCC BAA-1332).